A 201-amino-acid chain; its full sequence is Probable thymidylate kinase (201 aa).

10–17 (GIDGSGKS) is an ATP binding site.

This sequence belongs to the thymidylate kinase family.

It carries out the reaction dTMP + ATP = dTDP + ADP. The sequence is that of Probable thymidylate kinase from Methanococcoides burtonii (strain DSM 6242 / NBRC 107633 / OCM 468 / ACE-M).